A 525-amino-acid polypeptide reads, in one-letter code: Glutamate--cysteine ligase (525 aa).

This sequence belongs to the glutamate--cysteine ligase type 1 family. Type 1 subfamily.

It carries out the reaction L-cysteine + L-glutamate + ATP = gamma-L-glutamyl-L-cysteine + ADP + phosphate + H(+). It functions in the pathway sulfur metabolism; glutathione biosynthesis; glutathione from L-cysteine and L-glutamate: step 1/2. This is Glutamate--cysteine ligase from Vibrio vulnificus (strain YJ016).